The primary structure comprises 64 residues: uncharacterized protein (64 aa).

A helical membrane pass occupies residues 33-55 (YTPLGSYMIFGIVHYFCSYHIGI).

The protein resides in the membrane. This is an uncharacterized protein from Saccharomyces cerevisiae (strain ATCC 204508 / S288c) (Baker's yeast).